Here is a 191-residue protein sequence, read N- to C-terminus: UPF0149 protein VV2847 (191 aa).

It belongs to the UPF0149 family.

This chain is UPF0149 protein VV2847, found in Vibrio vulnificus (strain YJ016).